A 309-amino-acid chain; its full sequence is Mitochondrial phosphate carrier protein 1, mitochondrial (309 aa).

Residues 1 to 15 (MTRVKSKLDEELSSP) are Mitochondrial intermembrane-facing. Residues 16–36 (WFYTVCTMGGMLSAGTTHLAI) form a helical membrane-spanning segment. 3 Solcar repeats span residues 16-100 (WFYT…FKTL), 109-193 (NRTS…SVEF), and 210-289 (QQLG…IKVL). At 37-74 (TPLDVLKVNMQVNPVKYNSIPSGFSTLLREHGHSYLWR) the chain is on the mitochondrial matrix side. A helical membrane pass occupies residues 75–94 (GWSGKLLGYGVQGGCRFGLY). Residues 95–111 (EYFKTLYSDVLPNHNRT) lie on the Mitochondrial intermembrane side of the membrane. Residues 112–132 (SIYFLSSASAQIFADMALCPF) traverse the membrane as a helical segment. The Mitochondrial matrix portion of the chain corresponds to 133–167 (EAIKVRVQTQPMFAKGLLDGFPRVYRSEGLAGFHR). Residues 168–187 (GLFPLWCRNLPFSMVMFSTF) traverse the membrane as a helical segment. Topologically, residues 188 to 208 (EQSVEFIYQKIIQKRKQDCSK) are mitochondrial intermembrane. A helical membrane pass occupies residues 209-229 (AQQLGVTCLAGYTAGAVGTII). Topologically, residues 230–268 (SNPADVVLSSLYNNKAKNVLQAVRNIGFVGLFTRSLPVR) are mitochondrial matrix. Residues 269–289 (ITIVGPVITLQWFFYDAIKVL) form a helical membrane-spanning segment. Over 290-309 (SGFPTSGGVKKPVDAAKLSV) the chain is Mitochondrial intermembrane.

Belongs to the mitochondrial carrier (TC 2.A.29) family. Expressed in stems, leaves and flowers. Strong expression in the stamens of flowers.

The protein localises to the mitochondrion inner membrane. Functionally, transport of phosphate groups from the cytosol to the mitochondrial matrix. Mediates salt stress tolerance through an ATP-dependent pathway and via modulation of the gibberellin metabolism. This Arabidopsis thaliana (Mouse-ear cress) protein is Mitochondrial phosphate carrier protein 1, mitochondrial (MPT1).